The following is an 867-amino-acid chain: uncharacterized protein (867 aa).

The zn(2)-C6 fungal-type DNA-binding region spans 76–108; it reads CDFCRQKKIRCDMDQSPRPGNACINCRKHHLDC. Disordered stretches follow at residues 110–167 and 217–257; these read FTRT…ITPV and PQLA…NSNL. Polar residues-rich tracts occupy residues 137–167 and 248–257; these read SAKS…ITPV and SISSYTNSNL.

The protein resides in the nucleus. This is an uncharacterized protein from Schizosaccharomyces pombe (strain 972 / ATCC 24843) (Fission yeast).